The primary structure comprises 449 residues: Tryptophan--tRNA ligase (449 aa).

ATP is bound by residues 10-12 and 18-19; these read TTT and GN. Residues 11–19 carry the 'HIGH' region motif; the sequence is TTGTPHLGN. Residue Asp-143 coordinates L-tryptophan. Residues 155-157, Leu-197, and 204-208 each bind ATP; these read GRD and KMSKS. Residues 204–208 carry the 'KMSKS' region motif; that stretch reads KMSKS.

It belongs to the class-I aminoacyl-tRNA synthetase family. Homodimer.

The protein resides in the cytoplasm. It catalyses the reaction tRNA(Trp) + L-tryptophan + ATP = L-tryptophyl-tRNA(Trp) + AMP + diphosphate + H(+). Catalyzes the attachment of tryptophan to tRNA(Trp). The chain is Tryptophan--tRNA ligase from Pseudomonas putida (strain ATCC 47054 / DSM 6125 / CFBP 8728 / NCIMB 11950 / KT2440).